The sequence spans 266 residues: MAYSKILFCFMIGFVGFLPAITMATQYLVGDDRGWTLDFDYQTWAKNKTFKVGDTLAPPPSEGLTSGYDVITLTKPGKKWYICGVPTHCSDYNQKLVITVEDGAPAPAPASPAPQTEYWVGDDKGWTIDVDYQAWAKGKTFKVGDTLVFKYTKGHHNVFKVNQTGFQNCIAPPPSEGLTSGHDVITLAAPGKKWYICGFPTHCSEHKQKLAITVEGAPAQTPPVWAPAPAPGTPKKIDTGNSYKITSPYKMFVGGAVSIWTILTLV.

Residues 1–24 (MAYSKILFCFMIGFVGFLPAITMA) form the signal peptide. Phytocyanin domains follow at residues 25 to 56 (TQYL…GDTL), 57 to 102 (APPP…TVED), and 116 to 216 (TEYW…TVEG). An N-linked (GlcNAc...) asparagine glycan is attached at Asn-47. His-156 provides a ligand contact to Cu cation. Asn-162 is a glycosylation site (N-linked (GlcNAc...) asparagine). Cys-169 and Cys-203 are disulfide-bonded. 3 residues coordinate Cu cation: Cys-197, His-202, and Gln-208. The helical transmembrane segment at 245 to 265 (ITSPYKMFVGGAVSIWTILTL) threads the bilayer.

It is found in the membrane. This is Blue copper protein from Petunia hybrida (Petunia).